We begin with the raw amino-acid sequence, 389 residues long: Chalcone synthase (389 aa).

The active site involves Cys164.

This sequence belongs to the thiolase-like superfamily. Chalcone/stilbene synthases family.

It catalyses the reaction (E)-4-coumaroyl-CoA + 3 malonyl-CoA + 3 H(+) = 2',4,4',6'-tetrahydroxychalcone + 3 CO2 + 4 CoA. It participates in secondary metabolite biosynthesis; flavonoid biosynthesis. Functionally, the primary product of this enzyme is 4,2',4',6'-tetrahydroxychalcone (also termed naringenin-chalcone or chalcone) which can under specific conditions spontaneously isomerize into naringenin. The polypeptide is Chalcone synthase (CHS1) (Casuarina glauca (Swamp oak)).